The following is a 136-amino-acid chain: Cell wall synthesis protein CwsA (136 aa).

Residues 94-114 (LLIAAVAVTVLGGGAAAFSIV) form a helical membrane-spanning segment.

This sequence belongs to the CwsA family. As to quaternary structure, interacts with CrgA and Wag31.

It localises to the cell membrane. Functionally, required for regulated cell division, cell wall synthesis and the maintenance of cell shape. This is Cell wall synthesis protein CwsA from Mycolicibacterium smegmatis (strain ATCC 700084 / mc(2)155) (Mycobacterium smegmatis).